The chain runs to 313 residues: Probable alpha-L-glutamate ligase (313 aa).

The 183-residue stretch at 112 to 294 folds into the ATP-grasp domain; it reads LQMLMAQGIA…IALQMIVHLE (183 aa). ATP-binding positions include Lys148, 185 to 186, Asp194, and 218 to 220; these read EF and RAN. Residues Asp255, Glu267, and Asn269 each contribute to the Mg(2+) site. Mn(2+)-binding residues include Asp255, Glu267, and Asn269.

The protein belongs to the RimK family. Mg(2+) serves as cofactor. Requires Mn(2+) as cofactor.

In Pasteurella multocida (strain Pm70), this protein is Probable alpha-L-glutamate ligase.